The sequence spans 228 residues: Triosephosphate isomerase (228 aa).

Residue 11–13 (NFK) coordinates substrate. His-95 functions as the Electrophile in the catalytic mechanism. The Proton acceptor role is filled by Glu-143. Residues Ile-148, Gly-183, and 204 to 205 (AS) contribute to the substrate site.

The protein belongs to the triosephosphate isomerase family. As to quaternary structure, homotetramer; dimer of dimers.

Its subcellular location is the cytoplasm. It catalyses the reaction D-glyceraldehyde 3-phosphate = dihydroxyacetone phosphate. It functions in the pathway carbohydrate biosynthesis; gluconeogenesis. It participates in carbohydrate degradation; glycolysis; D-glyceraldehyde 3-phosphate from glycerone phosphate: step 1/1. In terms of biological role, involved in the gluconeogenesis. Catalyzes stereospecifically the conversion of dihydroxyacetone phosphate (DHAP) to D-glyceraldehyde-3-phosphate (G3P). The polypeptide is Triosephosphate isomerase (Pyrococcus horikoshii (strain ATCC 700860 / DSM 12428 / JCM 9974 / NBRC 100139 / OT-3)).